The chain runs to 533 residues: Chromosomal replication initiator protein DnaA (533 aa).

The domain I, interacts with DnaA modulators stretch occupies residues 1-72 (MNDFWQHCSA…DLARDFWNAP (72 aa)). A domain II region spans residues 72 to 196 (PIEVQFVLDP…EAADSMYERS (125 aa)). A disordered region spans residues 83 to 110 (AGQRSPAGATPLAPRAPLPSANPAPVGP). Residues 96 to 110 (PRAPLPSANPAPVGP) are compositionally biased toward pro residues. The interval 197–413 (KLNPVLTFDN…GALRKILAYS (217 aa)) is domain III, AAA+ region. Glycine 241, glycine 243, lysine 244, and threonine 245 together coordinate ATP. A domain IV, binds dsDNA region spans residues 414 to 533 (KFHGREITIE…LHVLEQTLKG (120 aa)).

This sequence belongs to the DnaA family. In terms of assembly, oligomerizes as a right-handed, spiral filament on DNA at oriC.

The protein localises to the cytoplasm. In terms of biological role, plays an essential role in the initiation and regulation of chromosomal replication. ATP-DnaA binds to the origin of replication (oriC) to initiate formation of the DNA replication initiation complex once per cell cycle. Binds the DnaA box (a 9 base pair repeat at the origin) and separates the double-stranded (ds)DNA. Forms a right-handed helical filament on oriC DNA; dsDNA binds to the exterior of the filament while single-stranded (ss)DNA is stabiized in the filament's interior. The ATP-DnaA-oriC complex binds and stabilizes one strand of the AT-rich DNA unwinding element (DUE), permitting loading of DNA polymerase. After initiation quickly degrades to an ADP-DnaA complex that is not apt for DNA replication. Binds acidic phospholipids. The sequence is that of Chromosomal replication initiator protein DnaA from Burkholderia mallei (strain NCTC 10247).